Here is a 946-residue protein sequence, read N- to C-terminus: Protein translocase subunit SecA (946 aa).

Residues glutamine 89, 107–111, and aspartate 508 contribute to the ATP site; that span reads GEGKT. The disordered stretch occupies residues 534–569; it reads PEDSHKPPVPLQRRKDSSVGFGKEENNSKDKKVNHS. The span at 546 to 569 shows a compositional bias: basic and acidic residues; that stretch reads RRKDSSVGFGKEENNSKDKKVNHS.

This sequence belongs to the SecA family. As to quaternary structure, monomer and homodimer. Part of the essential Sec protein translocation apparatus which comprises SecA, SecYEG and auxiliary proteins SecDF. Other proteins may also be involved.

The protein resides in the cell inner membrane. The protein localises to the cellular thylakoid membrane. It localises to the cytoplasm. The catalysed reaction is ATP + H2O + cellular proteinSide 1 = ADP + phosphate + cellular proteinSide 2.. Functionally, part of the Sec protein translocase complex. Interacts with the SecYEG preprotein conducting channel. Has a central role in coupling the hydrolysis of ATP to the transfer of proteins into and across the cell membrane, serving as an ATP-driven molecular motor driving the stepwise translocation of polypeptide chains across the membrane. Its function is as follows. Probably participates in protein translocation into and across both the cytoplasmic and thylakoid membranes in cyanobacterial cells. This chain is Protein translocase subunit SecA, found in Prochlorococcus marinus (strain SARG / CCMP1375 / SS120).